A 495-amino-acid chain; its full sequence is Alpha-1B-glycoprotein (495 aa).

A signal peptide spans 1–21; sequence MSMLVVFLLLWGVTWGPVTEA. Ig-like V-type domains are found at residues 22–113, 114–206, 207–299, 300–397, and 398–495; these read AIFY…LTGP, KSLP…ELAA, PPPP…PVEL, ILSD…LHVD, and GPPP…VAES. Asparagine 44 is a glycosylation site (N-linked (GlcNAc...) (complex) asparagine). Cystine bridges form between cysteine 49-cysteine 93, cysteine 139-cysteine 182, cysteine 232-cysteine 279, cysteine 325-cysteine 374, and cysteine 423-cysteine 470. N-linked (GlcNAc...) asparagine glycosylation is present at asparagine 179. Residues asparagine 363 and asparagine 371 are each glycosylated (N-linked (GlcNAc...) asparagine).

Interacts with CRISP3. Plasma.

It is found in the secreted. The sequence is that of Alpha-1B-glycoprotein (A1BG) from Homo sapiens (Human).